A 359-amino-acid chain; its full sequence is Peptide chain release factor 1 (359 aa).

Gln-236 is modified (N5-methylglutamine). Residues 288–307 (QDEQDAERKSTIGTGDRSER) are disordered. A compositionally biased stretch (basic and acidic residues) spans 293 to 307 (AERKSTIGTGDRSER).

Belongs to the prokaryotic/mitochondrial release factor family. Methylated by PrmC. Methylation increases the termination efficiency of RF1.

It is found in the cytoplasm. Functionally, peptide chain release factor 1 directs the termination of translation in response to the peptide chain termination codons UAG and UAA. The chain is Peptide chain release factor 1 from Streptococcus sanguinis (strain SK36).